A 429-amino-acid chain; its full sequence is Tyrosine--tRNA ligase (429 aa).

Residue Tyr-36 participates in L-tyrosine binding. The 'HIGH' region motif lies at 41–50; the sequence is PTAASLHAGH. 2 residues coordinate L-tyrosine: Tyr-171 and Gln-175. Positions 231–235 match the 'KMSKS' region motif; it reads KFGKS. ATP is bound at residue Lys-234. Positions 360–417 constitute an S4 RNA-binding domain; that stretch reads ATIVDLLVATGLAESRGAARRTVNEGGAAVNNQKIADPDWTPADGDYLHGRWLVVRRG.

It belongs to the class-I aminoacyl-tRNA synthetase family. TyrS type 1 subfamily. As to quaternary structure, homodimer.

The protein localises to the cytoplasm. It carries out the reaction tRNA(Tyr) + L-tyrosine + ATP = L-tyrosyl-tRNA(Tyr) + AMP + diphosphate + H(+). In terms of biological role, catalyzes the attachment of tyrosine to tRNA(Tyr) in a two-step reaction: tyrosine is first activated by ATP to form Tyr-AMP and then transferred to the acceptor end of tRNA(Tyr). The protein is Tyrosine--tRNA ligase of Nocardia farcinica (strain IFM 10152).